The chain runs to 224 residues: ATP-dependent dethiobiotin synthetase BioD (224 aa).

14–19 (GIGKTV) provides a ligand contact to ATP. Residue Thr-18 coordinates Mg(2+). Lys-39 is a catalytic residue. Residue Ser-43 coordinates substrate. ATP is bound by residues Asp-56, 117 to 120 (EGVG), and 177 to 178 (NE). Mg(2+)-binding residues include Asp-56 and Glu-117.

The protein belongs to the dethiobiotin synthetase family. As to quaternary structure, homodimer. Requires Mg(2+) as cofactor.

It is found in the cytoplasm. The enzyme catalyses (7R,8S)-7,8-diammoniononanoate + CO2 + ATP = (4R,5S)-dethiobiotin + ADP + phosphate + 3 H(+). The protein operates within cofactor biosynthesis; biotin biosynthesis; biotin from 7,8-diaminononanoate: step 1/2. In terms of biological role, catalyzes a mechanistically unusual reaction, the ATP-dependent insertion of CO2 between the N7 and N8 nitrogen atoms of 7,8-diaminopelargonic acid (DAPA, also called 7,8-diammoniononanoate) to form a ureido ring. This chain is ATP-dependent dethiobiotin synthetase BioD, found in Xanthomonas campestris pv. campestris (strain B100).